A 178-amino-acid polypeptide reads, in one-letter code: Ribonuclease M5 (178 aa).

The 97-residue stretch at 4 to 100 folds into the Toprim domain; that stretch reads NEFIVVEGRD…KIGVEHADLI (97 aa). Positions 10, 56, and 58 each coordinate Mg(2+).

The protein belongs to the ribonuclease M5 family. Mg(2+) is required as a cofactor.

The protein resides in the cytoplasm. The catalysed reaction is Endonucleolytic cleavage of RNA, removing 21 and 42 nucleotides, respectively, from the 5'- and 3'-termini of a 5S-rRNA precursor.. In terms of biological role, required for correct processing of both the 5' and 3' ends of 5S rRNA precursor. Cleaves both sides of a double-stranded region yielding mature 5S rRNA in one step. The polypeptide is Ribonuclease M5 (Staphylococcus aureus (strain NCTC 8325 / PS 47)).